We begin with the raw amino-acid sequence, 377 residues long: Mannan endo-1,4-beta-mannosidase A (377 aa).

Positions 1–18 (MKLSHMLLSLASLGVATA) are cleaved as a signal peptide. Trp84 lines the substrate pocket. Asn105 carries N-linked (GlcNAc...) asparagine glycosylation. Asn197 provides a ligand contact to substrate. Residue Glu198 is the Proton donor of the active site. A glycan (N-linked (GlcNAc...) asparagine) is linked at Asn255. Residue Tyr273 coordinates substrate. Glu306 serves as the catalytic Nucleophile. Asn326 is a glycosylation site (N-linked (GlcNAc...) asparagine). Trp336 lines the substrate pocket. A glycan (N-linked (GlcNAc...) asparagine) is linked at Asn357.

Belongs to the glycosyl hydrolase 5 (cellulase A) family.

The protein localises to the secreted. It catalyses the reaction Random hydrolysis of (1-&gt;4)-beta-D-mannosidic linkages in mannans, galactomannans and glucomannans.. In terms of biological role, endo-1,4-mannanase, a crucial enzyme for depolymerization of seed galactomannans and wood galactoglucomannans. The protein is Mannan endo-1,4-beta-mannosidase A (manA) of Aspergillus aculeatus.